The sequence spans 330 residues: MALSVYYDKDIDLGVIQSLQVGIIGYGTQGEAQALNLRDSKVKVRVGLYQGSLSIPKAKAEGFEVLEVKELVQKSDVIMALLPDELHKEVLEKEVIPFLKEGQIVGFAHGFSVHFNQVSFKKGVGVILVAPKGPGSALREEYLKNKGLYHLIAIEQENSKNNAKAVALSYAKAMGGGRMGVLETSFKEECESDLFGEQAVLCGGLEAVVRMGFETLIKAGYPEELAYFECVHEVKLVADLLHYKGVEGLRKHISNTAEFGAIKAREPMENLLEKRMQKILKKIQNGSFAKDFLLEKSLNYPRLNTERKALKETKIEQVGEILRTPFNHEK.

In terms of domain architecture, KARI N-terminal Rossmann spans 3-184 (LSVYYDKDID…GGGRMGVLET (182 aa)). NADP(+)-binding positions include 26–29 (YGTQ), S52, and S54. The active site involves H109. G135 contacts NADP(+). In terms of domain architecture, KARI C-terminal knotted spans 185-329 (SFKEECESDL…EILRTPFNHE (145 aa)). Mg(2+) contacts are provided by D193, E197, E229, and E233. Residue S254 coordinates substrate.

Belongs to the ketol-acid reductoisomerase family. Mg(2+) serves as cofactor.

It catalyses the reaction (2R)-2,3-dihydroxy-3-methylbutanoate + NADP(+) = (2S)-2-acetolactate + NADPH + H(+). The catalysed reaction is (2R,3R)-2,3-dihydroxy-3-methylpentanoate + NADP(+) = (S)-2-ethyl-2-hydroxy-3-oxobutanoate + NADPH + H(+). Its pathway is amino-acid biosynthesis; L-isoleucine biosynthesis; L-isoleucine from 2-oxobutanoate: step 2/4. The protein operates within amino-acid biosynthesis; L-valine biosynthesis; L-valine from pyruvate: step 2/4. In terms of biological role, involved in the biosynthesis of branched-chain amino acids (BCAA). Catalyzes an alkyl-migration followed by a ketol-acid reduction of (S)-2-acetolactate (S2AL) to yield (R)-2,3-dihydroxy-isovalerate. In the isomerase reaction, S2AL is rearranged via a Mg-dependent methyl migration to produce 3-hydroxy-3-methyl-2-ketobutyrate (HMKB). In the reductase reaction, this 2-ketoacid undergoes a metal-dependent reduction by NADPH to yield (R)-2,3-dihydroxy-isovalerate. The sequence is that of Ketol-acid reductoisomerase (NADP(+)) from Helicobacter acinonychis (strain Sheeba).